The primary structure comprises 131 residues: MNLYEIMLEHFAPKGSERGIFTYLLAQSDEEVYEWLKTDPSLSDGRAVYTPYQDNEANGKTYAIYNQSFDIVGHEKYKDRMIRLKGELNDEVELTDLYYGMTLVGWSMVKSDIPSEQIELLKDTGISIESA.

The polypeptide is SPbeta prophage-derived uncharacterized protein YoqY (yoqY) (Bacillus subtilis (strain 168)).